Here is a 305-residue protein sequence, read N- to C-terminus: uncharacterized protein (305 aa).

The signal sequence occupies residues 1–29; sequence MKKWFSSISKKKVSFSTLLLLGSGIVLSS. The N-palmitoyl cysteine moiety is linked to residue cysteine 30. The S-diacylglycerol cysteine moiety is linked to residue cysteine 30. Residues 234 to 265 are disordered; that stretch reads FYNPDNSNGSNAPGSNQPNQDSGNNGSTTPAA. The span at 237–258 shows a compositional bias: polar residues; sequence PDNSNGSNAPGSNQPNQDSGNN.

It is found in the cell membrane. This is an uncharacterized protein from Mycoplasma pneumoniae (strain ATCC 29342 / M129 / Subtype 1) (Mycoplasmoides pneumoniae).